A 143-amino-acid chain; its full sequence is MQPQLSRPQTATNQVRNSVSGPWSGNAAHKAEKYFITSAKRDRNDKLQIEIMPSSGRRKLSPTPEMIPKLIDGEIEIYVLTTQPDIAIDLGKQVIDMENRYVIDFDKRGVKWTMRDIPVFYREGKGLCVELDNRIYTLNEFFK.

The segment covering 1-23 has biased composition (polar residues); sequence MQPQLSRPQTATNQVRNSVSGPW. A disordered region spans residues 1 to 25; that stretch reads MQPQLSRPQTATNQVRNSVSGPWSG.

Component of the P840 reaction center.

In Chlorobaculum thiosulfatiphilum (Chlorobium limicola f.sp. thiosulfatophilum), this protein is P840 reaction center 17 kDa protein (pscD).